A 364-amino-acid chain; its full sequence is Dual-specificity RNA methyltransferase RlmN (364 aa).

The active-site Proton acceptor is Glu91. The Radical SAM core domain maps to 97–333 (ESDRGTLCIS…VTVRKTRGDD (237 aa)). Cys104 and Cys338 are oxidised to a cystine. Positions 111, 115, and 118 each coordinate [4Fe-4S] cluster. S-adenosyl-L-methionine-binding positions include 164–165 (GE), Ser196, 218–220 (SLH), and Asn295. The S-methylcysteine intermediate role is filled by Cys338.

The protein belongs to the radical SAM superfamily. RlmN family. It depends on [4Fe-4S] cluster as a cofactor.

It localises to the cytoplasm. The enzyme catalyses adenosine(2503) in 23S rRNA + 2 reduced [2Fe-2S]-[ferredoxin] + 2 S-adenosyl-L-methionine = 2-methyladenosine(2503) in 23S rRNA + 5'-deoxyadenosine + L-methionine + 2 oxidized [2Fe-2S]-[ferredoxin] + S-adenosyl-L-homocysteine. It catalyses the reaction adenosine(37) in tRNA + 2 reduced [2Fe-2S]-[ferredoxin] + 2 S-adenosyl-L-methionine = 2-methyladenosine(37) in tRNA + 5'-deoxyadenosine + L-methionine + 2 oxidized [2Fe-2S]-[ferredoxin] + S-adenosyl-L-homocysteine. Specifically methylates position 2 of adenine 2503 in 23S rRNA and position 2 of adenine 37 in tRNAs. m2A2503 modification seems to play a crucial role in the proofreading step occurring at the peptidyl transferase center and thus would serve to optimize ribosomal fidelity. The polypeptide is Dual-specificity RNA methyltransferase RlmN (Neisseria gonorrhoeae (strain ATCC 700825 / FA 1090)).